We begin with the raw amino-acid sequence, 223 residues long: MKSAVILLPGLNRNRDMIAALTKITGQAPVTVWQTDTSIPDDVDLILIPGGFSYGDYLRCGAIAARMPVMQAVREKADKGVMVMGVCNGFQILLEAGLLPGALMRNASLKFVCREVKLEVTNANTSFTRGYKPGQIIRCPVAHHDGNYFADAETLKRLEGEGQVVFRYAEGTNPNGSVNDIAGIVNARGNVLGMMPHPENLIEAAHGGDDGRALFAGALGITA.

In terms of domain architecture, Glutamine amidotransferase type-1 spans 3 to 223 (SAVILLPGLN…LFAGALGITA (221 aa)). Cys87 acts as the Nucleophile in catalysis. Residues His197 and Glu199 contribute to the active site.

Part of the FGAM synthase complex composed of 1 PurL, 1 PurQ and 2 PurS subunits.

Its subcellular location is the cytoplasm. It carries out the reaction N(2)-formyl-N(1)-(5-phospho-beta-D-ribosyl)glycinamide + L-glutamine + ATP + H2O = 2-formamido-N(1)-(5-O-phospho-beta-D-ribosyl)acetamidine + L-glutamate + ADP + phosphate + H(+). It catalyses the reaction L-glutamine + H2O = L-glutamate + NH4(+). It participates in purine metabolism; IMP biosynthesis via de novo pathway; 5-amino-1-(5-phospho-D-ribosyl)imidazole from N(2)-formyl-N(1)-(5-phospho-D-ribosyl)glycinamide: step 1/2. Functionally, part of the phosphoribosylformylglycinamidine synthase complex involved in the purines biosynthetic pathway. Catalyzes the ATP-dependent conversion of formylglycinamide ribonucleotide (FGAR) and glutamine to yield formylglycinamidine ribonucleotide (FGAM) and glutamate. The FGAM synthase complex is composed of three subunits. PurQ produces an ammonia molecule by converting glutamine to glutamate. PurL transfers the ammonia molecule to FGAR to form FGAM in an ATP-dependent manner. PurS interacts with PurQ and PurL and is thought to assist in the transfer of the ammonia molecule from PurQ to PurL. The sequence is that of Phosphoribosylformylglycinamidine synthase subunit PurQ from Brucella abortus biovar 1 (strain 9-941).